The primary structure comprises 446 residues: 6-methylsalicylate 1-monooxygenase atA (446 aa).

A helical membrane pass occupies residues 7 to 27 (VSVAIIGGGIGGLSLAIGLLQ). Positions 37 and 50 each coordinate FAD. Asn107 is a glycosylation site (N-linked (GlcNAc...) asparagine). Arg116 lines the FAD pocket. The active site involves Arg200. 2 residues coordinate FAD: Asp311 and Ala324.

Belongs to the paxM FAD-dependent monooxygenase family. The cofactor is FAD.

The protein localises to the membrane. The enzyme catalyses 6-methylsalicylate + AH2 + O2 + H(+) = 3-methylcatechol + A + CO2 + H2O. It participates in secondary metabolite biosynthesis. 6-methylsalicylate 1-monooxygenase; part of the gene cluster that mediates the biosynthesis of terreic acid, a quinone epoxide inhibitor of Bruton's tyrosine kinase. The first step of the pathway is the synthesis of 6-methylsalicylic acid (6-MSA) by the 6-methylsalicylic acid synthase atX. In the biosynthesis of 6-MSA, atX utilizes one acetyl-CoA and three malonyl-CoAs as its substrates and catalyzes a series of programmed reactions including Claisen condensation, reduction, aldol cyclization, and the hydrolytic cleavage that yields 6-MSA. The 6-methylsalicylate 1-monooxygenase atA then catalyzes the decarboxylative hydroxylation of 6-MSA to 3-methylcatechol. The next step is the conversion of 3-methylcatechol to 3-methyl-1,2,4-benzenetriol by cytochrome P450 monooxygenase atE, which is enhanced by cytochrome P450 monooxygenase atG. Then, the epoxidase atD catalyzes the epoxidation and hydroxyl oxidation of 3-methyl-1,2,4-benzenetriol to terremutin. Lastly, GMC oxidoreductase atC oxidizes terremutin to terreic acid. This Aspergillus terreus (strain NIH 2624 / FGSC A1156) protein is 6-methylsalicylate 1-monooxygenase atA.